A 221-amino-acid polypeptide reads, in one-letter code: Vesicle transport v-SNARE 11 (221 aa).

Residue S2 is modified to N-acetylserine. Topologically, residues 2–198 are cytoplasmic; sequence SDVFDGYERQ…MTRRMNKNKW (197 aa). Positions 32–93 form a coiled coil; sequence EQKKQKLSEI…FKTEVKRITS (62 aa). The helical; Anchor for type IV membrane protein transmembrane segment at 199–219 threads the bilayer; that stretch reads TIGAIIIALIAAIFIILYFKL. Residues 220–221 are Vesicular-facing; that stretch reads TK.

It belongs to the VTI1 family. In terms of assembly, forms SNARE complexes with the t-SNAREs SYP51 and either SYP21 or SYP22 in the PVC, and with a much lower affinity with SYP61 in the TGN. Does not interact with SYP41, SYP42 or VPS45. Binds to EPSIN1. Interacts with SCYL2B. In terms of tissue distribution, expressed in roots, stems, flowers and leaves.

Its subcellular location is the golgi apparatus. The protein resides in the trans-Golgi network membrane. It is found in the prevacuolar compartment membrane. It localises to the vacuole membrane. Functionally, functions as a v-SNARE responsible for targeting AtELP-containing vesicles from the trans-Golgi network (TGN) to the prevacuolar compartment (PVC) and mediates liposome fusion. May be also involved in retrograde traffic to the cis-Golgi. Promotes the formation of vacuolar membrane 'bulbs'. Necessary to deliver proteins to the lytic vacuole, but seems not involved in storage proteins transport. Required for amyloplast sedimentation in the endodermis during shoot gravitropism, which are thus acting as statoliths. Expression in the endodermis is essential for the shoot gravitropic response, whereas expression in other tissues may be responsible for the correct stem and leaf shape. The polypeptide is Vesicle transport v-SNARE 11 (Arabidopsis thaliana (Mouse-ear cress)).